The primary structure comprises 187 residues: Ribosome-recycling factor (187 aa).

It belongs to the RRF family.

The protein localises to the cytoplasm. Functionally, responsible for the release of ribosomes from messenger RNA at the termination of protein biosynthesis. May increase the efficiency of translation by recycling ribosomes from one round of translation to another. The protein is Ribosome-recycling factor of Flavobacterium johnsoniae (strain ATCC 17061 / DSM 2064 / JCM 8514 / BCRC 14874 / CCUG 350202 / NBRC 14942 / NCIMB 11054 / UW101) (Cytophaga johnsonae).